The primary structure comprises 304 residues: N-acetyl-D-glucosamine kinase (304 aa).

Residues 4 to 11 (GFDMGGTK) and 133 to 140 (GLGGGLVI) contribute to the ATP site. Positions 157, 177, 179, and 184 each coordinate Zn(2+).

Belongs to the ROK (NagC/XylR) family. NagK subfamily.

It carries out the reaction N-acetyl-D-glucosamine + ATP = N-acetyl-D-glucosamine 6-phosphate + ADP + H(+). The protein operates within cell wall biogenesis; peptidoglycan recycling. Its function is as follows. Catalyzes the phosphorylation of N-acetyl-D-glucosamine (GlcNAc) derived from cell-wall degradation, yielding GlcNAc-6-P. In Pectobacterium carotovorum subsp. carotovorum (strain PC1), this protein is N-acetyl-D-glucosamine kinase.